We begin with the raw amino-acid sequence, 638 residues long: Phosphomethylpyrimidine synthase (638 aa).

Substrate is bound by residues asparagine 236, methionine 265, tyrosine 294, histidine 330, serine 350 to glycine 352, aspartate 391 to arginine 394, and glutamate 430. Histidine 434 contacts Zn(2+). Substrate is bound at residue tyrosine 457. Zn(2+) is bound at residue histidine 498. Residues cysteine 578, cysteine 581, and cysteine 586 each contribute to the [4Fe-4S] cluster site.

It belongs to the ThiC family. As to quaternary structure, homodimer. [4Fe-4S] cluster serves as cofactor.

It catalyses the reaction 5-amino-1-(5-phospho-beta-D-ribosyl)imidazole + S-adenosyl-L-methionine = 4-amino-2-methyl-5-(phosphooxymethyl)pyrimidine + CO + 5'-deoxyadenosine + formate + L-methionine + 3 H(+). It participates in cofactor biosynthesis; thiamine diphosphate biosynthesis. In terms of biological role, catalyzes the synthesis of the hydroxymethylpyrimidine phosphate (HMP-P) moiety of thiamine from aminoimidazole ribotide (AIR) in a radical S-adenosyl-L-methionine (SAM)-dependent reaction. This Polaromonas sp. (strain JS666 / ATCC BAA-500) protein is Phosphomethylpyrimidine synthase.